Reading from the N-terminus, the 333-residue chain is MITFEGVEKVYESGGQKVHALNGIDLHVDKGEIYGVIGFSGAGKSTLIRCVNFLEKPTAGKVFVGGRDLMSLSKAEIRTVKRKIGMVFQHFNLLNSKTIFANVAEPLALVKTPKADIKKKVTELLRFVGLEDKARDYPDQLSGGQKQRVGIARALATNPEVLLCDEATSALDPQTTGDILKLLKRVNEQYNITILLITHEMNVAKEICDKVAVIEKGRIIESGSVFDVFSAPETETAKSFVKSAIDHEIPESIQKLNLKHLYQLQFVGESSGKPFLSQVSKRYDVEVNILHGTITELQGIPFGSMTVELQGEDGEIGRALEYIRRENIRIREV.

Positions 2 to 241 (ITFEGVEKVY…PETETAKSFV (240 aa)) constitute an ABC transporter domain. Position 38–45 (38–45 (GFSGAGKS)) interacts with ATP.

It belongs to the ABC transporter superfamily. Methionine importer (TC 3.A.1.24) family. In terms of assembly, the complex is composed of two ATP-binding proteins (MetN), two transmembrane proteins (MetI) and a solute-binding protein (MetQ).

The protein resides in the cell membrane. The catalysed reaction is L-methionine(out) + ATP + H2O = L-methionine(in) + ADP + phosphate + H(+). The enzyme catalyses D-methionine(out) + ATP + H2O = D-methionine(in) + ADP + phosphate + H(+). Part of the ABC transporter complex MetNIQ involved in methionine import. Responsible for energy coupling to the transport system. This is Methionine import ATP-binding protein MetN 1 from Bacillus licheniformis (strain ATCC 14580 / DSM 13 / JCM 2505 / CCUG 7422 / NBRC 12200 / NCIMB 9375 / NCTC 10341 / NRRL NRS-1264 / Gibson 46).